Consider the following 125-residue polypeptide: MALDIERIKEELSQATVLELKQLIDALKEAWGVTAAAPVAVAAAPAAGAAAAPAEEKTEFDVILKEAGAKKLEVIKELRAITGLGLKEAKDLAEKGGPVKEGVSKQEAEEIKKKLEAVGAVVELK.

It belongs to the bacterial ribosomal protein bL12 family. Homodimer. Part of the ribosomal stalk of the 50S ribosomal subunit. Forms a multimeric L10(L12)X complex, where L10 forms an elongated spine to which 2 to 4 L12 dimers bind in a sequential fashion. Binds GTP-bound translation factors.

In terms of biological role, forms part of the ribosomal stalk which helps the ribosome interact with GTP-bound translation factors. Is thus essential for accurate translation. In Thermus thermophilus (strain ATCC BAA-163 / DSM 7039 / HB27), this protein is Large ribosomal subunit protein bL12.